Consider the following 489-residue polypeptide: Cytochrome P450 2C3 (489 aa).

C434 is a heme binding site.

It belongs to the cytochrome P450 family. Heme is required as a cofactor.

Its subcellular location is the endoplasmic reticulum membrane. The protein resides in the microsome membrane. It catalyses the reaction an organic molecule + reduced [NADPH--hemoprotein reductase] + O2 = an alcohol + oxidized [NADPH--hemoprotein reductase] + H2O + H(+). In terms of biological role, cytochromes P450 are a group of heme-thiolate monooxygenases. In liver microsomes, this enzyme is involved in an NADPH-dependent electron transport pathway. It oxidizes a variety of structurally unrelated compounds, including steroids, fatty acids, and xenobiotics. The protein is Cytochrome P450 2C3 (CYP2C3) of Oryctolagus cuniculus (Rabbit).